The chain runs to 115 residues: Cholecystokinin (115 aa).

Residues 1 to 20 (MNSGVCLCVLMAVLAAGALT) form the signal peptide. The propeptide occupies 21-44 (QPVPPADPAGSGLQRAEEAPRRQL). Positions 23–52 (VPPADPAGSGLQRAEEAPRRQLRVSQRTDG) are disordered. O-linked (Xyl...) (chondroitin sulfate) serine glycosylation is present at Ser-31. Tyr-97 is subject to Sulfotyrosine. Phe-103 is modified (phenylalanine amide). The propeptide occupies 107-115 (SAEEYEYPS). Residues Tyr-111 and Tyr-113 each carry the sulfotyrosine modification.

The protein belongs to the gastrin/cholecystokinin family. As to quaternary structure, binds to CCK-A receptors in the pancreas and CCK-B receptors in the brain. The precursor is cleaved by proteases to produce a number of active cholecystokinins. In terms of processing, the precursor is cleaved by ACE, which removes the Gly-Arg-Arg peptide at the C-terminus, leading to mature hormone. In terms of tissue distribution, detected in cerebrospinal fluid and urine (at protein level).

It is found in the secreted. Functionally, this peptide hormone induces gall bladder contraction and the release of pancreatic enzymes in the gut. Its function in the brain is not clear. Binding to CCK-A receptors stimulates amylase release from the pancreas, binding to CCK-B receptors stimulates gastric acid secretion. This is Cholecystokinin (CCK) from Homo sapiens (Human).